The following is a 1191-amino-acid chain: Probable inositol polyphosphate 5-phosphatase C9G1.10c (1191 aa).

Composition is skewed to polar residues over residues Met-1 to Val-10, Gln-72 to Asn-101, Ser-114 to Ser-135, Ser-151 to Gly-161, and Asn-181 to Ser-193. A disordered region spans residues Met-1 to Ser-193. The residue at position 195 (Ser-195) is a Phosphoserine. 3 disordered regions span residues Ser-205–Val-281, Ser-294–Leu-334, and Ile-355–Ser-425. Residues Thr-268 to Pro-280 are compositionally biased toward pro residues. Basic residues predominate over residues Ser-302–Leu-311. Polar residues-rich tracts occupy residues Thr-316–Leu-334, His-367–Leu-382, and Leu-400–Glu-413. Residues Gln-414–Ser-425 show a composition bias toward low complexity.

The protein belongs to the inositol 1,4,5-trisphosphate 5-phosphatase family.

It is found in the cytoplasm. The chain is Probable inositol polyphosphate 5-phosphatase C9G1.10c from Schizosaccharomyces pombe (strain 972 / ATCC 24843) (Fission yeast).